The chain runs to 137 residues: Phosphoribosyl-AMP cyclohydrolase (137 aa).

Aspartate 84 is a Mg(2+) binding site. Cysteine 85 contacts Zn(2+). Mg(2+)-binding residues include aspartate 86 and aspartate 88. Zn(2+) contacts are provided by cysteine 101 and cysteine 108.

It belongs to the PRA-CH family. In terms of assembly, homodimer. It depends on Mg(2+) as a cofactor. The cofactor is Zn(2+).

The protein resides in the cytoplasm. The catalysed reaction is 1-(5-phospho-beta-D-ribosyl)-5'-AMP + H2O = 1-(5-phospho-beta-D-ribosyl)-5-[(5-phospho-beta-D-ribosylamino)methylideneamino]imidazole-4-carboxamide. It participates in amino-acid biosynthesis; L-histidine biosynthesis; L-histidine from 5-phospho-alpha-D-ribose 1-diphosphate: step 3/9. Catalyzes the hydrolysis of the adenine ring of phosphoribosyl-AMP. In Chlorobium phaeobacteroides (strain DSM 266 / SMG 266 / 2430), this protein is Phosphoribosyl-AMP cyclohydrolase.